The sequence spans 293 residues: Ribosomal protein L11 methyltransferase (293 aa).

Positions 145, 166, 188, and 230 each coordinate S-adenosyl-L-methionine.

Belongs to the methyltransferase superfamily. PrmA family.

It localises to the cytoplasm. It carries out the reaction L-lysyl-[protein] + 3 S-adenosyl-L-methionine = N(6),N(6),N(6)-trimethyl-L-lysyl-[protein] + 3 S-adenosyl-L-homocysteine + 3 H(+). Functionally, methylates ribosomal protein L11. The chain is Ribosomal protein L11 methyltransferase from Citrobacter koseri (strain ATCC BAA-895 / CDC 4225-83 / SGSC4696).